Consider the following 317-residue polypeptide: Ribosomal RNA small subunit methyltransferase H (317 aa).

S-adenosyl-L-methionine is bound by residues 39–41, aspartate 59, phenylalanine 83, aspartate 104, and glutamine 111; that span reads GGH.

The protein belongs to the methyltransferase superfamily. RsmH family.

The protein localises to the cytoplasm. It catalyses the reaction cytidine(1402) in 16S rRNA + S-adenosyl-L-methionine = N(4)-methylcytidine(1402) in 16S rRNA + S-adenosyl-L-homocysteine + H(+). Specifically methylates the N4 position of cytidine in position 1402 (C1402) of 16S rRNA. The sequence is that of Ribosomal RNA small subunit methyltransferase H from Paraburkholderia phymatum (strain DSM 17167 / CIP 108236 / LMG 21445 / STM815) (Burkholderia phymatum).